Here is an 82-residue protein sequence, read N- to C-terminus: Sec-independent protein translocase protein TatA (82 aa).

Residues G2–F22 traverse the membrane as a helical segment. Residues K43 to V82 form a disordered region. Basic and acidic residues-rich tracts occupy residues A44–E64 and A71–V82.

It belongs to the TatA/E family. As to quaternary structure, the Tat system comprises two distinct complexes: a TatABC complex, containing multiple copies of TatA, TatB and TatC subunits, and a separate TatA complex, containing only TatA subunits. Substrates initially bind to the TatABC complex, which probably triggers association of the separate TatA complex to form the active translocon.

Its subcellular location is the cell inner membrane. Part of the twin-arginine translocation (Tat) system that transports large folded proteins containing a characteristic twin-arginine motif in their signal peptide across membranes. TatA could form the protein-conducting channel of the Tat system. This chain is Sec-independent protein translocase protein TatA, found in Pseudoalteromonas translucida (strain TAC 125).